We begin with the raw amino-acid sequence, 1169 residues long: Transcription-repair-coupling factor (1169 aa).

The region spanning Asp-634 to Ile-795 is the Helicase ATP-binding domain. Gly-647 to Thr-654 serves as a coordination point for ATP. The short motif at Asp-748 to Gln-751 is the DEEQ box element. The Helicase C-terminal domain occupies Val-809 to Asn-970.

This sequence in the N-terminal section; belongs to the UvrB family. In the C-terminal section; belongs to the helicase family. RecG subfamily.

It localises to the cytoplasm. Couples transcription and DNA repair by recognizing RNA polymerase (RNAP) stalled at DNA lesions. Mediates ATP-dependent release of RNAP and its truncated transcript from the DNA, and recruitment of nucleotide excision repair machinery to the damaged site. This is Transcription-repair-coupling factor from Staphylococcus epidermidis (strain ATCC 12228 / FDA PCI 1200).